The chain runs to 262 residues: MSRHQARKRFGQHFLTDDSVVEAIVRAIAPARGDRVVEIGPGLSALTQPLLRGLDHLTVVEIDRDLAARLRNAHAPGRLTVIEADALTVDFASLGERLRVVGNLPYNISSPLLFHLMAAADTVRDQHFMLQREVIDRMVAAPGSADYGRLSVMLQSRYRMDKLFDVPPEAFDPPPRVVSAVVRMVPLPADRLRPASEAALQAVVARAFAQRRKMLRRGLGDWAALVPWDALDIAPTARAEEISVEKFIRLTDALLQAGAVPA.

Positions 13, 15, 40, 61, 85, and 103 each coordinate S-adenosyl-L-methionine.

This sequence belongs to the class I-like SAM-binding methyltransferase superfamily. rRNA adenine N(6)-methyltransferase family. RsmA subfamily.

It localises to the cytoplasm. The enzyme catalyses adenosine(1518)/adenosine(1519) in 16S rRNA + 4 S-adenosyl-L-methionine = N(6)-dimethyladenosine(1518)/N(6)-dimethyladenosine(1519) in 16S rRNA + 4 S-adenosyl-L-homocysteine + 4 H(+). Specifically dimethylates two adjacent adenosines (A1518 and A1519) in the loop of a conserved hairpin near the 3'-end of 16S rRNA in the 30S particle. May play a critical role in biogenesis of 30S subunits. This is Ribosomal RNA small subunit methyltransferase A from Bordetella petrii (strain ATCC BAA-461 / DSM 12804 / CCUG 43448).